The chain runs to 557 residues: Urocanate hydratase (557 aa).

NAD(+) contacts are provided by residues 53–54 (GG), glutamine 131, 177–179 (GMG), aspartate 197, arginine 202, 243–244 (NA), 264–268 (QTSAH), 274–275 (YL), and tyrosine 323. Residue cysteine 411 is part of the active site. Residue glycine 493 coordinates NAD(+).

It belongs to the urocanase family. It depends on NAD(+) as a cofactor.

The protein resides in the cytoplasm. It catalyses the reaction 4-imidazolone-5-propanoate = trans-urocanate + H2O. The protein operates within amino-acid degradation; L-histidine degradation into L-glutamate; N-formimidoyl-L-glutamate from L-histidine: step 2/3. Catalyzes the conversion of urocanate to 4-imidazolone-5-propionate. This is Urocanate hydratase from Hahella chejuensis (strain KCTC 2396).